Reading from the N-terminus, the 217-residue chain is Adenylate kinase (217 aa).

Gly10 to Thr15 is an ATP binding site. The interval Ser30 to Val59 is NMP. AMP contacts are provided by residues Thr31, Arg36, Glu57–Val59, Gly85–Arg88, and Gln92. The tract at residues Gly126–Asp163 is LID. Arg127 is a binding site for ATP. Positions 130 and 133 each coordinate Zn(2+). Thr136–Tyr137 is a binding site for ATP. Zn(2+) contacts are provided by Cys150 and Cys153. AMP is bound by residues Arg160 and Arg171. Position 199 (Lys199) interacts with ATP.

The protein belongs to the adenylate kinase family. As to quaternary structure, monomer.

It localises to the cytoplasm. The enzyme catalyses AMP + ATP = 2 ADP. The protein operates within purine metabolism; AMP biosynthesis via salvage pathway; AMP from ADP: step 1/1. Catalyzes the reversible transfer of the terminal phosphate group between ATP and AMP. Plays an important role in cellular energy homeostasis and in adenine nucleotide metabolism. This Bacillus pumilus (strain SAFR-032) protein is Adenylate kinase.